The sequence spans 1487 residues: Secretory phospholipase A2 receptor (1487 aa).

The first 26 residues, 1 to 26 (MVQWLAMLQLLWLQQLLLLGIHQGIA), serve as a signal peptide directing secretion. Topologically, residues 27-1396 (QDLTHIQEPS…AQPEKGLSHS (1370 aa)) are extracellular. The 124-residue stretch at 42–165 (KGIFIIQSES…SSGGDICEHP (124 aa)) folds into the Ricin B-type lectin domain. 4 cysteine pairs are disulfide-bonded: Cys-55–Cys-68, Cys-93–Cys-110, Cys-181–Cys-207, and Cys-195–Cys-222. Asn-97 carries N-linked (GlcNAc...) asparagine glycosylation. A Fibronectin type-II domain is found at 176-224 (AHGMPCVFPFQFKGHWHHDCIREGQKEHLLWCATTSRYEEDEKWGFCPD). An N-linked (GlcNAc...) asparagine glycan is attached at Asn-239. 6 C-type lectin domains span residues 241–357 (SSRI…YICK), 387–504 (FNRK…YICK), 524–643 (HGRF…MSLC), 673–797 (GLAS…WICR), 819–938 (YQNA…SICK), and 964–1095 (FNYK…GFVC). 10 disulfides stabilise this stretch: Cys-263/Cys-356, Cys-333/Cys-348, Cys-408/Cys-503, Cys-480/Cys-495, Cys-617/Cys-634, Cys-699/Cys-796, Cys-774/Cys-788, Cys-840/Cys-937, Cys-914/Cys-929, and Cys-1066/Cys-1086. A glycan (N-linked (GlcNAc...) asparagine) is linked at Asn-928. N-linked (GlcNAc...) asparagine glycans are attached at residues Asn-1107, Asn-1122, and Asn-1131. 2 C-type lectin domains span residues 1120–1231 (YGNR…GAIC) and 1256–1377 (FKGN…FICK). 3 disulfides stabilise this stretch: Cys-1208/Cys-1222, Cys-1279/Cys-1376, and Cys-1353/Cys-1368. Residues 1397 to 1417 (IVPVTVTLTLIIALGIFMLCF) form a helical membrane-spanning segment. The Cytoplasmic segment spans residues 1418-1487 (WIYKQKSDIF…HKGRPICISP (70 aa)). Positions 1435 to 1441 (GSYYPTL) match the Endocytosis signal motif. Positions 1463-1475 (DEEVRDAPATESK) are enriched in basic and acidic residues. Residues 1463-1487 (DEEVRDAPATESKRGHKGRPICISP) form a disordered region.

In terms of assembly, interacts with sPLA2-IB/PLA2G1B; this interaction mediates intracellular signaling as well as clearance of extracellular sPLA2-IB/PLA2G1B via endocytotic pathway. Interacts with sPLA2-X/PLA2G10; this interaction mediates sPLA2-X/PLA2G10 clearance and inactivation. In terms of processing, the secretory phospholipase A2 receptor form may be produced by the action of metalloproteinases. It contains all extracellular domains and only lacks transmembrane and cytosolic regions. It is however unclear whether this form is produced by proteolytic cleavage as suggested by some experiments reported by PubMed:11830583, or by alternative splicing. As to expression, widely expressed. Present in type II alveolar epithelial cells and a subset of splenic lymphocytes. Present at the surface of polymorphonuclear neutrophils (at protein level).

It is found in the cell membrane. The protein resides in the secreted. In terms of biological role, receptor for secretory phospholipase A2 (sPLA2). Acts as a receptor for phospholipases sPLA2-IB/PLA2G1B, sPLA2-X/PLA2G10 and, with lower affinity, sPLA2-IIA/PLA2G2A. Also able to bind to snake PA2-like toxins. Although its precise function remains unclear, binding of sPLA2 to its receptor participates in both positive and negative regulation of sPLA2 functions as well as clearance of sPLA2. Binding of sPLA2-IB/PLA2G1B induces various effects depending on the cell type, such as activation of the mitogen-activated protein kinase (MAPK) cascade to induce cell proliferation, the production of lipid mediators, selective release of arachidonic acid in bone marrow-derived mast cells. In neutrophils, binding of sPLA2-IB/PLA2G1B can activate p38 MAPK to stimulate elastase release and cell adhesion. May be involved in responses in pro-inflammatory cytokine productions during endotoxic shock. Also has endocytic properties and rapidly internalizes sPLA2 ligands, which is particularly important for the clearance of extracellular sPLA2s to protect their potent enzymatic activities. The soluble secretory phospholipase A2 receptor form is circulating and acts as a negative regulator of sPLA2 functions by blocking the biological functions of sPLA2-IB/PLA2G1B and sPLA2-X/PLA2G10. In podocytes, binding of sPLA2-IB/PLA2G1B can regulate podocyte survival and glomerular homeostasis. This chain is Secretory phospholipase A2 receptor (Pla2r1), found in Mus musculus (Mouse).